The chain runs to 120 residues: Aspartate 1-decarboxylase (120 aa).

Catalysis depends on Ser25, which acts as the Schiff-base intermediate with substrate; via pyruvic acid. Ser25 carries the post-translational modification Pyruvic acid (Ser). Thr57 serves as a coordination point for substrate. Residue Tyr58 is the Proton donor of the active site. Residue 73–75 (GAA) coordinates substrate.

This sequence belongs to the PanD family. As to quaternary structure, heterooctamer of four alpha and four beta subunits. It depends on pyruvate as a cofactor. Is synthesized initially as an inactive proenzyme, which is activated by self-cleavage at a specific serine bond to produce a beta-subunit with a hydroxyl group at its C-terminus and an alpha-subunit with a pyruvoyl group at its N-terminus.

It localises to the cytoplasm. The catalysed reaction is L-aspartate + H(+) = beta-alanine + CO2. It participates in cofactor biosynthesis; (R)-pantothenate biosynthesis; beta-alanine from L-aspartate: step 1/1. Catalyzes the pyruvoyl-dependent decarboxylation of aspartate to produce beta-alanine. This chain is Aspartate 1-decarboxylase, found in Polynucleobacter asymbioticus (strain DSM 18221 / CIP 109841 / QLW-P1DMWA-1) (Polynucleobacter necessarius subsp. asymbioticus).